The chain runs to 349 residues: Dihydroorotase (349 aa).

Histidine 17 and histidine 19 together coordinate Zn(2+). Substrate is bound by residues 19 to 21 (HLR) and asparagine 45. Residues lysine 105, histidine 142, and histidine 180 each contribute to the Zn(2+) site. N6-carboxylysine is present on lysine 105. Histidine 142 provides a ligand contact to substrate. Residue leucine 225 coordinates substrate. Aspartate 253 contacts Zn(2+). The active site involves aspartate 253. Positions 257 and 269 each coordinate substrate.

It belongs to the metallo-dependent hydrolases superfamily. DHOase family. Class II DHOase subfamily. As to quaternary structure, homodimer. Zn(2+) serves as cofactor.

The catalysed reaction is (S)-dihydroorotate + H2O = N-carbamoyl-L-aspartate + H(+). The protein operates within pyrimidine metabolism; UMP biosynthesis via de novo pathway; (S)-dihydroorotate from bicarbonate: step 3/3. Its function is as follows. Catalyzes the reversible cyclization of carbamoyl aspartate to dihydroorotate. This is Dihydroorotase from Nitrosomonas europaea (strain ATCC 19718 / CIP 103999 / KCTC 2705 / NBRC 14298).